The chain runs to 102 residues: Large ribosomal subunit protein uL24c (102 aa).

This sequence belongs to the universal ribosomal protein uL24 family. As to quaternary structure, part of the 50S ribosomal subunit.

It localises to the plastid. The protein localises to the chloroplast. In terms of biological role, one of two assembly initiator proteins, it binds directly to the 5'-end of the 23S rRNA, where it nucleates assembly of the 50S subunit. The chain is Large ribosomal subunit protein uL24c (rpl24) from Rhodomonas salina (Cryptomonas salina).